The primary structure comprises 395 residues: MAKAKFERTKPHVNIGTIGHVDHGKTTLTAAITTVLAKQGKAEAKAYDQIDAAPEERERGITISTAHVEYETEARHYAHVDCPGHADYVKNMITGAAQMDGAILVVSAADGPMPQTREHILLSRQVGVPYIVVFLNKCDMVDDEELLELVEMEVRDLLSEYDFPGDEVPVIKGSALKALEGDPKWEEKIIELMNAVDEYIPTPQREVDKPFMMPIEDVFSITGRGTVATGRVERGTLKVGDPVEIIGLSDEPKATTVTGVEMFRKLLDQAEAGDNIGALLRGVSRDEVERGQVLAKPGSITPHTKFKAQVYVLTKEEGGRHTPFFSNYRPQFYFRTTDVTGIITLPEGVEMVMPGDNVEMTVELIAPIAIEEGTKFSIREGGRTVGAGSVSEIIE.

The tr-type G domain maps to 10–204 (KPHVNIGTIG…AVDEYIPTPQ (195 aa)). Residues 19–26 (GHVDHGKT) are G1. Position 19–26 (19–26 (GHVDHGKT)) interacts with GTP. T26 provides a ligand contact to Mg(2+). The tract at residues 60–64 (GITIS) is G2. The segment at 81 to 84 (DCPG) is G3. GTP-binding positions include 81–85 (DCPGH) and 136–139 (NKCD). Residues 136–139 (NKCD) form a G4 region. The interval 174–176 (SAL) is G5.

This sequence belongs to the TRAFAC class translation factor GTPase superfamily. Classic translation factor GTPase family. EF-Tu/EF-1A subfamily. In terms of assembly, monomer.

It is found in the cytoplasm. It catalyses the reaction GTP + H2O = GDP + phosphate + H(+). Functionally, GTP hydrolase that promotes the GTP-dependent binding of aminoacyl-tRNA to the A-site of ribosomes during protein biosynthesis. The chain is Elongation factor Tu from Geobacillus stearothermophilus (Bacillus stearothermophilus).